The sequence spans 763 residues: MDRGRVLEQLLPELTGLLSLLDHEYLSDTTLEKKMAVASILQSLQPLPAKEVSYLYVNTADLHSGPSFVESLFEEFDCDLSGLQDMPEDEAESCKAASPEPAKSPSLRHTADLPPPLPNRPPPEDYYEEALPLGPGKSPEYISSHNGCSPAHSLMDGYYEDADSSYPATRMNGELKNSYNDSDAMSSSYESYDEEEEEGKGPQPTHQWPSEEASMHLVRDCRICAFLLRKKRFGQWAKQLTVIKEDQLLCYKSSKDRQPHLRLALDVCSVIYVPKDSRHKRHELRFAQGATEVLVLALQSREQAEEWLKVIREVSKPVGGTEGADVPRSPVLLCKADLDKRLSQEKQTSDSDSLGMGDSCSTLGREHGKGKKSSLSELKGSMSRAAGRKITRIISFSKKKALADDLQASSTEEVPCCGYLNVLVNHGWKERWCRLKCNTLYFHKDRTDLRTHVNAIALRGCEVAPGFGPRHPFAFRILHNRQEVAILEASCSEDMGRWLGLLLVEMGSKVTPEALHYDYVDVETLTSIVSAGRNSFLYARSCQDQWPEPRVYDDVPYEKMQDEEPERPPGAQVKRHASTCSEKSHRVDPQVKVKRHASSAHQYKYGKNRAEEDARRYLVEKEKLEKEKETIRTELMALRQEKRELKEAIRNNPGAKLKALEEALATLEAQCRAKEEHRIDLELRLVTVKERLQQSLAGGPALGLSVNSKIKSGETANKPQNNVPEQPLPVNCVSELRKRSPSIINSNQGRVLQKAKEWEMKKT.

The interval Leu-83–Lys-137 is disordered. Phosphoserine is present on residues Ser-98, Ser-104, and Ser-153. Positions Thr-169–Ser-210 are disordered. Positions Leu-175–Met-185 are enriched in polar residues. One can recognise a PH 1 domain in the interval Asp-220–Lys-316. Residues Ser-329 and Ser-343 each carry the phosphoserine modification. Residues Ser-343 to Gly-380 are disordered. The region spanning Glu-413–Gly-507 is the PH 2 domain. Position 552 is a phosphotyrosine (Tyr-552). The interval Gln-561 to Lys-604 is disordered. Positions Glu-582–Val-591 are enriched in basic and acidic residues. Residues Gly-606 to Gln-694 adopt a coiled-coil conformation. Residues Ser-712–Pro-724 are compositionally biased toward polar residues. A disordered region spans residues Ser-712 to Thr-763. Ser-742 bears the Phosphoserine mark. Over residues Lys-754–Thr-763 the composition is skewed to basic and acidic residues.

Interacts with CTTN.

The protein localises to the cytoplasm. It is found in the cell projection. Its subcellular location is the podosome. It localises to the invadopodium. The protein resides in the cytoskeleton. The protein localises to the stress fiber. Its function is as follows. May be involved in podosome and invadosome formation. The chain is Actin filament-associated protein 1-like 1 (AFAP1L1) from Bos taurus (Bovine).